We begin with the raw amino-acid sequence, 380 residues long: Cobalt-precorrin-5B C(1)-methyltransferase (380 aa).

It belongs to the CbiD family.

The catalysed reaction is Co-precorrin-5B + S-adenosyl-L-methionine = Co-precorrin-6A + S-adenosyl-L-homocysteine. It functions in the pathway cofactor biosynthesis; adenosylcobalamin biosynthesis; cob(II)yrinate a,c-diamide from sirohydrochlorin (anaerobic route): step 6/10. Functionally, catalyzes the methylation of C-1 in cobalt-precorrin-5B to form cobalt-precorrin-6A. The protein is Cobalt-precorrin-5B C(1)-methyltransferase of Salinispora tropica (strain ATCC BAA-916 / DSM 44818 / JCM 13857 / NBRC 105044 / CNB-440).